A 461-amino-acid chain; its full sequence is Cysteine--tRNA ligase (461 aa).

Cysteine 28 contacts Zn(2+). The short motif at 30 to 40 (MTVYDYCHLGH) is the 'HIGH' region element. Residues cysteine 212, histidine 237, and glutamate 241 each coordinate Zn(2+). The 'KMSKS' region signature appears at 269–273 (KMSKS). An ATP-binding site is contributed by lysine 272.

Belongs to the class-I aminoacyl-tRNA synthetase family. In terms of assembly, monomer. Zn(2+) serves as cofactor.

Its subcellular location is the cytoplasm. The enzyme catalyses tRNA(Cys) + L-cysteine + ATP = L-cysteinyl-tRNA(Cys) + AMP + diphosphate. This is Cysteine--tRNA ligase from Aromatoleum aromaticum (strain DSM 19018 / LMG 30748 / EbN1) (Azoarcus sp. (strain EbN1)).